Reading from the N-terminus, the 215-residue chain is Adenylate kinase (215 aa).

10–15 (GSGKGT) contributes to the ATP binding site. The NMP stretch occupies residues 30–59 (STGDLFRTNIENDTPLGKEIKQIVENGQLV). AMP-binding positions include Thr-31, Arg-36, 57 to 59 (QLV), 85 to 88 (GFPR), and Gln-92. An LID region spans residues 121–158 (GRRICQSCCKIFNIYTLPTKEKEICDFCQGILYQRKDD). Residue Arg-122 coordinates ATP. Zn(2+)-binding residues include Cys-125 and Cys-128. 131–132 (IF) provides a ligand contact to ATP. Zn(2+)-binding residues include Cys-145 and Cys-148. AMP contacts are provided by Arg-155 and Arg-166. Lys-194 is an ATP binding site.

Belongs to the adenylate kinase family. In terms of assembly, monomer.

It localises to the cytoplasm. The enzyme catalyses AMP + ATP = 2 ADP. It functions in the pathway purine metabolism; AMP biosynthesis via salvage pathway; AMP from ADP: step 1/1. Functionally, catalyzes the reversible transfer of the terminal phosphate group between ATP and AMP. Plays an important role in cellular energy homeostasis and in adenine nucleotide metabolism. The sequence is that of Adenylate kinase from Borrelia recurrentis (strain A1).